A 362-amino-acid polypeptide reads, in one-letter code: Bifunctional chorismate mutase/prephenate dehydratase (362 aa).

Residues 1–92 form the Chorismate mutase domain; the sequence is MEELKELRKE…ACLSLEKKIK (92 aa). Arg-8, Arg-25, Lys-36, and Glu-49 together coordinate substrate. The region spanning 93-267 is the Prephenate dehydratase domain; sequence VAYLGPKATF…NFTRFLVIAK (175 aa). The ACT domain maps to 279-356; the sequence is SILFGVKDEP…QFLKVLGSYP (78 aa).

It is found in the cytoplasm. It catalyses the reaction chorismate = prephenate. It carries out the reaction prephenate + H(+) = 3-phenylpyruvate + CO2 + H2O. Its pathway is amino-acid biosynthesis; L-phenylalanine biosynthesis; phenylpyruvate from prephenate: step 1/1. It functions in the pathway metabolic intermediate biosynthesis; prephenate biosynthesis; prephenate from chorismate: step 1/1. In terms of biological role, catalyzes the Claisen rearrangement of chorismate to prephenate and the decarboxylation/dehydration of prephenate to phenylpyruvate. The polypeptide is Bifunctional chorismate mutase/prephenate dehydratase (pheA) (Aquifex aeolicus (strain VF5)).